A 104-amino-acid polypeptide reads, in one-letter code: L-rhamnose mutarotase (104 aa).

Tyr18 contributes to the substrate binding site. His22 serves as the catalytic Proton donor. Substrate contacts are provided by residues Tyr41 and 76–77 (WW).

This sequence belongs to the rhamnose mutarotase family. As to quaternary structure, homodimer.

Its subcellular location is the cytoplasm. The catalysed reaction is alpha-L-rhamnose = beta-L-rhamnose. The protein operates within carbohydrate metabolism; L-rhamnose metabolism. Its function is as follows. Involved in the anomeric conversion of L-rhamnose. The protein is L-rhamnose mutarotase of Phocaeicola vulgatus (strain ATCC 8482 / DSM 1447 / JCM 5826 / CCUG 4940 / NBRC 14291 / NCTC 11154) (Bacteroides vulgatus).